The chain runs to 224 residues: Phosphoribosylformylglycinamidine synthase subunit PurQ (224 aa).

Positions 2–224 (KVTILQFPGT…IKMLQGFLRA (223 aa)) constitute a Glutamine amidotransferase type-1 domain. The Nucleophile role is filled by Cys86. Residues His200 and Glu202 contribute to the active site.

In terms of assembly, part of the FGAM synthase complex composed of 1 PurL, 1 PurQ and 2 PurS subunits.

It localises to the cytoplasm. The catalysed reaction is N(2)-formyl-N(1)-(5-phospho-beta-D-ribosyl)glycinamide + L-glutamine + ATP + H2O = 2-formamido-N(1)-(5-O-phospho-beta-D-ribosyl)acetamidine + L-glutamate + ADP + phosphate + H(+). The enzyme catalyses L-glutamine + H2O = L-glutamate + NH4(+). It participates in purine metabolism; IMP biosynthesis via de novo pathway; 5-amino-1-(5-phospho-D-ribosyl)imidazole from N(2)-formyl-N(1)-(5-phospho-D-ribosyl)glycinamide: step 1/2. Its function is as follows. Part of the phosphoribosylformylglycinamidine synthase complex involved in the purines biosynthetic pathway. Catalyzes the ATP-dependent conversion of formylglycinamide ribonucleotide (FGAR) and glutamine to yield formylglycinamidine ribonucleotide (FGAM) and glutamate. The FGAM synthase complex is composed of three subunits. PurQ produces an ammonia molecule by converting glutamine to glutamate. PurL transfers the ammonia molecule to FGAR to form FGAM in an ATP-dependent manner. PurS interacts with PurQ and PurL and is thought to assist in the transfer of the ammonia molecule from PurQ to PurL. This is Phosphoribosylformylglycinamidine synthase subunit PurQ from Sulfurimonas denitrificans (strain ATCC 33889 / DSM 1251) (Thiomicrospira denitrificans (strain ATCC 33889 / DSM 1251)).